A 447-amino-acid chain; its full sequence is 1-aminocyclopropane-1-carboxylate synthase 7 (447 aa).

Positions 61 and 100 each coordinate substrate. N6-(pyridoxal phosphate)lysine is present on K285.

The protein belongs to the class-I pyridoxal-phosphate-dependent aminotransferase family. Homodimer and heterodimer. In vivo, the relevance of heterodimerization with other ACS enzymes is however unsure. Interacts with XBAT32. Pyridoxal 5'-phosphate is required as a cofactor. Ubiquitinated by XBAT32. Ubiquitination probably leads to its subsequent degradation, thus controlling ethylene production. Expressed in roots.

The enzyme catalyses S-adenosyl-L-methionine = 1-aminocyclopropane-1-carboxylate + S-methyl-5'-thioadenosine + H(+). Its pathway is alkene biosynthesis; ethylene biosynthesis via S-adenosyl-L-methionine; ethylene from S-adenosyl-L-methionine: step 1/2. Functionally, 1-aminocyclopropane-1-carboxylate synthase (ACS) enzymes catalyze the conversion of S-adenosyl-L-methionine (SAM) into 1-aminocyclopropane-1-carboxylate (ACC), a direct precursor of ethylene. This chain is 1-aminocyclopropane-1-carboxylate synthase 7 (ACS7), found in Arabidopsis thaliana (Mouse-ear cress).